A 385-amino-acid polypeptide reads, in one-letter code: Prepilin peptidase EppA (385 aa).

10 consecutive transmembrane segments (helical) span residues 1 to 21 (MILMVIELLSVFIALLACFYA), 29 to 49 (GIIPNRLTFPVIGLGLLLNGA), 58 to 78 (WIFIYTAIFTAGIFALGYILW), 80 to 100 (MVAWAGGDVKLFTAVTSLLPF), 104 to 124 (LVSYSFLGTAFPVTASYPFPL), 126 to 146 (VIINSILALLPFLLVYVFFII), 166 to 186 (TSMVLALVITSAVTLTFLITD), 187 to 207 (FLPFQIIVLSLILVYLLTMVI), 231 to 251 (FELTVSGVVILWVSITVIQLI), and 358 to 378 (PAIFIGLLVSLLIGDLAMILF).

The protein belongs to the peptidase A24 family.

The protein resides in the cell membrane. Its function is as follows. Peptidase that processes the N-terminus of prepilins. This is Prepilin peptidase EppA from Methanothermobacter thermautotrophicus (strain ATCC 29096 / DSM 1053 / JCM 10044 / NBRC 100330 / Delta H) (Methanobacterium thermoautotrophicum).